Consider the following 326-residue polypeptide: Eukaryotic translation initiation factor 3 subunit I (326 aa).

5 WD repeats span residues 8-47, 50-89, 145-184, 188-227, and 285-326; these read GHER…RLGT, GHQG…VIAS, MTES…KVVD, DHSA…CLKT, and GHFG…NIFE.

It belongs to the eIF-3 subunit I family. In terms of assembly, component of the eukaryotic translation initiation factor 3 (eIF-3) complex. The eIF-3 complex interacts with pix.

It is found in the cytoplasm. Its function is as follows. Component of the eukaryotic translation initiation factor 3 (eIF-3) complex, which is involved in protein synthesis of a specialized repertoire of mRNAs and, together with other initiation factors, stimulates binding of mRNA and methionyl-tRNAi to the 40S ribosome. The eIF-3 complex specifically targets and initiates translation of a subset of mRNAs involved in cell proliferation. This chain is Eukaryotic translation initiation factor 3 subunit I, found in Drosophila simulans (Fruit fly).